Consider the following 565-residue polypeptide: DNA-directed RNA polymerase subunit beta C-terminal section (565 aa).

This sequence belongs to the RNA polymerase beta chain family. In terms of assembly, in plastids the minimal PEP RNA polymerase catalytic core is composed of four subunits: alpha, beta, beta', and beta''. When a (nuclear-encoded) sigma factor is associated with the core the holoenzyme is formed, which can initiate transcription.

It is found in the plastid. The protein localises to the chloroplast. The catalysed reaction is RNA(n) + a ribonucleoside 5'-triphosphate = RNA(n+1) + diphosphate. Functionally, DNA-dependent RNA polymerase catalyzes the transcription of DNA into RNA using the four ribonucleoside triphosphates as substrates. The protein is DNA-directed RNA polymerase subunit beta C-terminal section (rpoB2) of Tetradesmus obliquus (Green alga).